A 396-amino-acid polypeptide reads, in one-letter code: Tryptophan synthase beta chain (396 aa).

Lysine 86 is subject to N6-(pyridoxal phosphate)lysine.

This sequence belongs to the TrpB family. Tetramer of two alpha and two beta chains. Pyridoxal 5'-phosphate serves as cofactor.

The catalysed reaction is (1S,2R)-1-C-(indol-3-yl)glycerol 3-phosphate + L-serine = D-glyceraldehyde 3-phosphate + L-tryptophan + H2O. It participates in amino-acid biosynthesis; L-tryptophan biosynthesis; L-tryptophan from chorismate: step 5/5. In terms of biological role, the beta subunit is responsible for the synthesis of L-tryptophan from indole and L-serine. This chain is Tryptophan synthase beta chain, found in Sodalis glossinidius (strain morsitans).